We begin with the raw amino-acid sequence, 188 residues long: NADH-quinone oxidoreductase subunit I (188 aa).

4Fe-4S ferredoxin-type domains are found at residues 44–74 and 90–119; these read LNRY…VEGA and RVYQ…MTNE. [4Fe-4S] cluster is bound by residues Cys-54, Cys-57, Cys-60, Cys-64, Cys-99, Cys-102, Cys-105, and Cys-109. The disordered stretch occupies residues 144 to 188; that stretch reads GMVDSPHPMAPGTTAEDYYRGTVTGGAAPASQDEPEADDTAGDRP. Acidic residues predominate over residues 176 to 188; it reads DEPEADDTAGDRP.

Belongs to the complex I 23 kDa subunit family. NDH-1 is composed of 14 different subunits. Subunits NuoA, H, J, K, L, M, N constitute the membrane sector of the complex. The cofactor is [4Fe-4S] cluster.

The protein resides in the cell membrane. The catalysed reaction is a quinone + NADH + 5 H(+)(in) = a quinol + NAD(+) + 4 H(+)(out). Its function is as follows. NDH-1 shuttles electrons from NADH, via FMN and iron-sulfur (Fe-S) centers, to quinones in the respiratory chain. The immediate electron acceptor for the enzyme in this species is believed to be ubiquinone. Couples the redox reaction to proton translocation (for every two electrons transferred, four hydrogen ions are translocated across the cytoplasmic membrane), and thus conserves the redox energy in a proton gradient. This is NADH-quinone oxidoreductase subunit I from Rhodococcus opacus (strain B4).